A 1372-amino-acid chain; its full sequence is Serine protease pic autotransporter (1372 aa).

The signal sequence occupies residues 1 to 55 (MNKVYSLKYCPVTGGLIAVSELARRVIKKTCRRLTHILLAGIPAICLCYSQISQA). Residues 56–301 (GIVRSDIAYQ…NVIPTDYLNQ (246 aa)) enclose the Peptidase S6 domain. Active-site charge relay system residues include His127, Asp155, and Ser258. The Autotransporter domain occupies 1106–1372 (DTNGDAGAWA…AVNANFRYMF (267 aa)).

Post-translationally, cleaved to release the mature protein from the outer membrane.

The protein resides in the periplasm. It is found in the secreted. Its subcellular location is the cell surface. The protein localises to the cell outer membrane. In terms of biological role, involved in intestinal colonization, displays in vitro mucinolytic activity, serum resistance, and hemagglutination. Important to penetrate the intestinal mucus layer. This Escherichia coli O44:H18 (strain 042 / EAEC) protein is Serine protease pic autotransporter (pic).